An 855-amino-acid polypeptide reads, in one-letter code: Protein translocase subunit SecA (855 aa).

ATP-binding positions include Gln88, 106-110, and Asp509; that span reads GEGKT. A disordered region spans residues 815 to 837; it reads EANLQNKFEKKPARNEPCPCGSG. Zn(2+) contacts are provided by Cys832, Cys834, Cys843, and Cys844.

The protein belongs to the SecA family. Monomer and homodimer. Part of the essential Sec protein translocation apparatus which comprises SecA, SecYEG and auxiliary proteins SecDF-YajC and YidC. Zn(2+) is required as a cofactor.

It is found in the cell inner membrane. It localises to the cytoplasm. The enzyme catalyses ATP + H2O + cellular proteinSide 1 = ADP + phosphate + cellular proteinSide 2.. Functionally, part of the Sec protein translocase complex. Interacts with the SecYEG preprotein conducting channel. Has a central role in coupling the hydrolysis of ATP to the transfer of proteins into and across the cell membrane, serving as an ATP-driven molecular motor driving the stepwise translocation of polypeptide chains across the membrane. This Campylobacter fetus subsp. fetus (strain 82-40) protein is Protein translocase subunit SecA.